Consider the following 6548-residue polypeptide: Epiplakin (6548 aa).

Position 33 is a phosphothreonine (Thr-33). 9 Plectin repeats span residues 41-78 (AALP…TGLG), 79-116 (LTLL…LELK), 117-154 (EKLL…RTLG), 155-192 (WRLL…KETW), 285-322 (RRYL…KGIA), 323-360 (LQLL…PELH), 362-398 (QLLV…QPLA), 399-436 (LRLL…EETR), and 437-470 (QRLS…PETG). The interaction with KRT5 stretch occupies residues 49-1123 (SIAGVYVEAS…KASGLHLLPL (1075 aa)). Positions 545-565 (SVEELAAELKNIVEQAAATAK) form a coiled coil. Plectin repeat units follow at residues 611-648 (QRYL…PGTA), 649-686 (LILL…PDVY), 687-724 (AKLL…RDHG), 725-762 (IRLL…QILN), and 766-800 (LDPS…SETG). A coiled-coil region spans residues 851–886 (TEDRRRQLLQRYRQRKITLEQVTQLLEKEMRRWTDI). Plectin repeat units follow at residues 931 to 968 (HRYL…PSTA), 969 to 1006 (LALL…AEVY), 1007 to 1044 (GKLK…VEQA), 1224 to 1284 (QETL…TGLG), 1285 to 1322 (QQLL…MEQS), 1323 to 1360 (EHLR…QSEA), 1361 to 1398 (FPLL…EQTS), and 1402 to 1436 (TATG…ADTG). Thr-1551 bears the Phosphothreonine mark. 5 Plectin repeats span residues 1572–1609 (RRSL…PGTA), 1610–1647 (LVLL…KETY), 1648–1685 (MKLL…RDHG), 1686–1723 (IRLL…EEMN), and 1727–1761 (SDPS…PETG). Residues 1580 to 6545 (FIAGVLIQDT…PETGLLFLSL (4966 aa)) are interaction with KRT5. Residues 1819-1851 (RKLLREYRAQNIGLENLLEVITSTVEETEKQSQ) adopt a coiled-coil conformation. Plectin repeat units lie at residues 1898 to 1935 (RVYL…AGFA), 1936 to 1973 (AQML…EDLR), 1974 to 2011 (ERLV…REEA), 2012 to 2049 (LRLL…DDSL), 2225 to 2267 (KRYL…PGTA), 2268 to 2305 (LVLL…GEIQ), 2306 to 2343 (EKLL…RDHG), 2344 to 2381 (IRLL…EDMN), and 2385 to 2419 (ADPG…PETG). Ser-2430 and Ser-2508 each carry phosphoserine. The segment at 2578–2626 (AEETQESKPKPRDASLKQQDTGARGSGTSPDEGDAQDSSESARQQQEQT) is disordered. The span at 2582–2592 (QESKPKPRDAS) shows a compositional bias: basic and acidic residues. Composition is skewed to polar residues over residues 2593–2606 (LKQQ…SGTS) and 2615–2626 (SSESARQQQEQT). Plectin repeat units lie at residues 2740–2782 (KRYL…PGTA), 2783–2820 (LVLL…GEIQ), 2821–2858 (EKLL…RDHG), 2859–2896 (IRLL…EDMN), and 2900–2934 (ADPG…PETG). The interval 2748-2940 (CIAGVLVPVQ…PETGFYMLQL (193 aa)) is interaction with KRT14. Residues 3093–3144 (AEETQESKPKPRDASLKQQDTGARGSGTSPDEGDAQDSSESARQQQEQTLRA) form a disordered region. Positions 3097 to 3107 (QESKPKPRDAS) are enriched in basic and acidic residues. 2 stretches are compositionally biased toward polar residues: residues 3108–3121 (LKQQ…SGTS) and 3130–3144 (SSES…TLRA). A Phosphoserine modification is found at Ser-3220. Plectin repeat units follow at residues 3255 to 3297 (KRYL…PGTA), 3298 to 3335 (LVLL…GEIQ), 3336 to 3373 (EKLL…RDHG), 3374 to 3411 (IRLL…EDMN), and 3415 to 3449 (ADPG…PETG). Ser-3460 and Ser-3538 each carry phosphoserine. Residues 3608-3659 (AEETQESKPKPRDASLKQQDTGARGSGTSPDEGDAQDSSESARQQQEQTLRA) are disordered. Over residues 3612 to 3622 (QESKPKPRDAS) the composition is skewed to basic and acidic residues. Polar residues-rich tracts occupy residues 3623-3636 (LKQQ…SGTS) and 3645-3659 (SSES…TLRA). Ser-3735 is subject to Phosphoserine. 5 Plectin repeats span residues 3770–3812 (KRYL…PGTA), 3813–3850 (LVLL…GEIQ), 3851–3888 (EKLL…RDHG), 3889–3926 (IRLL…EDMN), and 3930–3964 (ADPG…PETG). A phosphoserine mark is found at Ser-3975 and Ser-4053. The segment at 4123–4174 (AEETQESKPKPRDASLKQQDTGARGSGTSPDEGDAQDSSESARQQQEQTLRA) is disordered. A compositionally biased stretch (basic and acidic residues) spans 4127–4137 (QESKPKPRDAS). Polar residues-rich tracts occupy residues 4138 to 4151 (LKQQ…SGTS) and 4160 to 4174 (SSES…TLRA). Plectin repeat units follow at residues 4285–4327 (KRYL…PGTA), 4328–4365 (LVLL…GEIQ), 4366–4403 (EKLL…RDHG), 4404–4441 (IRLL…EDMN), and 4445–4479 (ADPG…PETG). The disordered stretch occupies residues 4638-4689 (AEETQESKPKPRDASLKQQDTGARGSGTSPDEGDAQDSSESARQQQEQTLRA). Basic and acidic residues predominate over residues 4642–4652 (QESKPKPRDAS). Composition is skewed to polar residues over residues 4653–4666 (LKQQ…SGTS) and 4675–4689 (SSES…TLRA). At Ser-4765 the chain carries Phosphoserine. Plectin repeat units follow at residues 4800-4842 (KRYL…PGTA), 4843-4880 (LVLL…GEIQ), 4881-4918 (EKLL…RDHG), 4919-4956 (IRLL…EDMN), and 4960-4994 (ADPG…PETG). Ser-5005 and Ser-5083 each carry phosphoserine. The disordered stretch occupies residues 5153 to 5204 (AEETQESKPKPRDASLKQQDTGARGSGTSPDEGDAQDSSESARQQQEQTLRA). Positions 5157–5167 (QESKPKPRDAS) are enriched in basic and acidic residues. Composition is skewed to polar residues over residues 5168–5181 (LKQQ…SGTS) and 5190–5204 (SSES…TLRA). Plectin repeat units lie at residues 5315 to 5357 (KRYL…PGTA), 5358 to 5395 (LVLL…GEIQ), 5396 to 5433 (EKLL…RDHG), 5434 to 5471 (IRLL…EDMN), and 5475 to 5509 (ADPG…PETG). The interval 5668-5719 (AEETQESKPKPRDASLKQQDTGARGSGTSPDEGDAQDSSESARQQQEQTLRA) is disordered. Residues 5672 to 5682 (QESKPKPRDAS) show a composition bias toward basic and acidic residues. Composition is skewed to polar residues over residues 5683–5696 (LKQQ…SGTS) and 5705–5719 (SSES…TLRA). A Phosphoserine modification is found at Ser-5795. Plectin repeat units follow at residues 5830–5872 (KRYL…PGTA), 5873–5910 (LVLL…GEIQ), 5911–5948 (EKLL…RDHG), 5949–5986 (IRLL…EDMN), and 5990–6024 (ADPG…PETG). Ser-6035 and Ser-6113 each carry phosphoserine. Positions 6183 to 6234 (AEETQESKPKPRDASLKQQDTGARGSGTSPDEGDAQDSSESARQQQEQTLRA) are disordered. Over residues 6187-6197 (QESKPKPRDAS) the composition is skewed to basic and acidic residues. Polar residues-rich tracts occupy residues 6198–6211 (LKQQ…SGTS) and 6220–6234 (SSES…TLRA). Phosphoserine is present on Ser-6310. Plectin repeat units follow at residues 6345–6387 (KRYL…PGTA), 6388–6425 (LVLL…GEIQ), 6426–6463 (EKLL…KNHG), 6464–6501 (IRLL…QEMN), and 6505–6539 (ADPG…PETG).

This sequence belongs to the plakin or cytolinker family. In terms of assembly, interacts with KRT5, KRT14 and KRT5/KRT14 heterotetramer; interacts preferentially with assembled filaments rather than keratin monomers. Interacts with KRT8 and KRT18 and KRT8/KRT18 heterotetramer; interacts preferentially with assembled filaments rather than keratin monomers. Interacts with KRT1, VIM and DES; interaction is stronger with KRT1 than with VIM or DES; interaction is dependent of higher-order structure of intermediate filament. As to expression, high levels in skin, small intestine and salivary gland. Lower levels in lung, uterus and liver. Not detected in brain, kidney, muscle, heart or spleen. In skin, expressed in all epidermal layers but not in the dermis. In intestine, expressed exclusively in the epithelial cell layer of the villi. In liver, expressed at hepatocyte margins. Around the region of the wound, expressed in the upper half of the epidermis. Weakly expressed on the basilar side of the suprabasal layer of the epidermis at the wound's edge. Expressed strongly in the upper layer of the epidermis, especially in larger keratinocytes. Expressed in undifferentiated primary keratinocytes. Strongly expressed in ductal cells, and also expressed in acinar cells. Expressed in hepatocytes and cholangiocytes.

It is found in the cytoplasm. It localises to the cytoskeleton. The protein resides in the apicolateral cell membrane. Its subcellular location is the basolateral cell membrane. The protein localises to the cell junction. It is found in the hemidesmosome. It localises to the tight junction. The protein resides in the cell projection. Functionally, cytoskeletal linker protein that connects to intermediate filaments and controls their reorganization in response to stress. In response to mechanical stress like wound healing, is associated with the machinery for cellular motility by slowing down keratinocyte migration and proliferation and accelerating keratin bundling in proliferating keratinocytes thus contributing to tissue architecture. However in wound healing in corneal epithelium also positively regulates cell differentiation and proliferation and negatively regulates migration thereby controlling corneal epithelium morphogenesis and integrity. In response to cellular stress, plays a role in keratin filament reorganization, probably by protecting keratin filaments against disruption. During liver and pancreas injuries, plays a protective role by chaperoning disease-induced intermediate filament reorganization. This is Epiplakin from Mus musculus (Mouse).